The chain runs to 211 residues: MKDKPALRVGIGGPVGSGKTALVEALCKALRDHYEIAVVTNDIYTREDAEFLTRNGALPADRIIGVETGGCPHTAIREDASMNLAAVGDLNQRFPELEVVFIESGGDNLSATFSPELSDLTLYVIDVCAGDKIPRKGGPGITRSDLLVINKIDLAAGVGASLEVMDRDSRRMRGDRPFIFTNLHAGEGLESVIDFIIREGMLDRKPGLAPA.

Residue 13–20 (GPVGSGKT) participates in GTP binding.

It belongs to the SIMIBI class G3E GTPase family. UreG subfamily. Homodimer. UreD, UreF and UreG form a complex that acts as a GTP-hydrolysis-dependent molecular chaperone, activating the urease apoprotein by helping to assemble the nickel containing metallocenter of UreC. The UreE protein probably delivers the nickel.

The protein resides in the cytoplasm. Facilitates the functional incorporation of the urease nickel metallocenter. This process requires GTP hydrolysis, probably effectuated by UreG. The protein is Urease accessory protein UreG of Alkalilimnicola ehrlichii (strain ATCC BAA-1101 / DSM 17681 / MLHE-1).